A 357-amino-acid chain; its full sequence is Phosphoribosylformylglycinamidine cyclo-ligase (357 aa).

It belongs to the AIR synthase family.

The protein localises to the cytoplasm. The catalysed reaction is 2-formamido-N(1)-(5-O-phospho-beta-D-ribosyl)acetamidine + ATP = 5-amino-1-(5-phospho-beta-D-ribosyl)imidazole + ADP + phosphate + H(+). It participates in purine metabolism; IMP biosynthesis via de novo pathway; 5-amino-1-(5-phospho-D-ribosyl)imidazole from N(2)-formyl-N(1)-(5-phospho-D-ribosyl)glycinamide: step 2/2. This Rhizobium etli (strain CIAT 652) protein is Phosphoribosylformylglycinamidine cyclo-ligase.